The following is a 152-amino-acid chain: Keratin, high-sulfur matrix protein, B2C (152 aa).

Ala2 carries the N-acetylalanine modification. 3 consecutive repeats follow at residues 27–36 (STCSQTSCCQ), 37–46 (PTSIQTSCCQ), and 47–56 (PTCLQTSGCE).

The keratin products of mammalian epidermal derivatives such as wool and hair consist of microfibrils embedded in a rigid matrix of other proteins. The matrix proteins include the high-sulfur and high-tyrosine keratins, having molecular weights of 6-20 kDa, whereas the microfibrils contain the larger, low-sulfur keratins (40-56 kDa). This Ovis aries (Sheep) protein is Keratin, high-sulfur matrix protein, B2C.